Here is a 1890-residue protein sequence, read N- to C-terminus: Putative aminopeptidase-2 (1890 aa).

An N-terminal signal peptide occupies residues 1-20; it reads MRRKLLLLLCFIGLFSLIST. N-linked (GlcNAc...) asparagine glycosylation is present at asparagine 110. Substrate contacts are provided by residues glutamate 220 and 354–358; that span reads GAMEN. Histidine 390 serves as a coordination point for Zn(2+). Glutamate 391 functions as the Proton acceptor in the catalytic mechanism. Residues histidine 394 and glutamate 413 each coordinate Zn(2+). Residues asparagine 534, asparagine 581, asparagine 785, asparagine 803, asparagine 914, asparagine 1024, and asparagine 1094 are each glycosylated (N-linked (GlcNAc...) asparagine). A substrate-binding site is contributed by glutamate 1143. The N-linked (GlcNAc...) asparagine glycan is linked to asparagine 1245. A substrate-binding site is contributed by 1280–1284; it reads GAMEN. Zn(2+) is bound at residue histidine 1316. The active-site Proton acceptor is glutamate 1317. Residues histidine 1320 and glutamate 1339 each contribute to the Zn(2+) site. N-linked (GlcNAc...) asparagine glycosylation is found at asparagine 1451, asparagine 1521, asparagine 1826, and asparagine 1841.

This sequence belongs to the peptidase M1 family. It depends on Zn(2+) as a cofactor.

In terms of biological role, putative aminopeptidase which plays a role in oocyte maturation. This Caenorhabditis elegans protein is Putative aminopeptidase-2.